The sequence spans 722 residues: Glycine--tRNA ligase beta subunit (722 aa).

The protein belongs to the class-II aminoacyl-tRNA synthetase family. In terms of assembly, tetramer of two alpha and two beta subunits.

It localises to the cytoplasm. It carries out the reaction tRNA(Gly) + glycine + ATP = glycyl-tRNA(Gly) + AMP + diphosphate. The protein is Glycine--tRNA ligase beta subunit (glyS) of Synechocystis sp. (strain ATCC 27184 / PCC 6803 / Kazusa).